Here is a 267-residue protein sequence, read N- to C-terminus: Acyl-[acyl-carrier-protein]--UDP-N-acetylglucosamine O-acyltransferase (267 aa).

The protein belongs to the transferase hexapeptide repeat family. LpxA subfamily. Homotrimer.

Its subcellular location is the cytoplasm. The enzyme catalyses a (3R)-hydroxyacyl-[ACP] + UDP-N-acetyl-alpha-D-glucosamine = a UDP-3-O-[(3R)-3-hydroxyacyl]-N-acetyl-alpha-D-glucosamine + holo-[ACP]. It participates in glycolipid biosynthesis; lipid IV(A) biosynthesis; lipid IV(A) from (3R)-3-hydroxytetradecanoyl-[acyl-carrier-protein] and UDP-N-acetyl-alpha-D-glucosamine: step 1/6. Functionally, involved in the biosynthesis of lipid A, a phosphorylated glycolipid that anchors the lipopolysaccharide to the outer membrane of the cell. This is Acyl-[acyl-carrier-protein]--UDP-N-acetylglucosamine O-acyltransferase from Cupriavidus necator (strain ATCC 17699 / DSM 428 / KCTC 22496 / NCIMB 10442 / H16 / Stanier 337) (Ralstonia eutropha).